Here is a 67-residue protein sequence, read N- to C-terminus: Small ribosomal subunit protein eS31 (67 aa).

Zn(2+) is bound by residues cysteine 31, cysteine 34, cysteine 49, and cysteine 52. A C4-type zinc finger spans residues 31–52 (CPKCGAGVFMAEHLNRFACGKC).

This sequence belongs to the eukaryotic ribosomal protein eS31 family. In terms of assembly, part of the 30S ribosomal subunit. Requires Zn(2+) as cofactor.

This Methanococcus maripaludis (strain C6 / ATCC BAA-1332) protein is Small ribosomal subunit protein eS31.